A 241-amino-acid polypeptide reads, in one-letter code: Polyol phosphate phosphatase PYP1 (241 aa).

The Nucleophile role is filled by Asp-9. Asp-9, Asp-11, and Asp-179 together coordinate Mg(2+). Residue Asp-11 is the Proton donor of the active site.

Belongs to the HAD-like hydrolase superfamily. The cofactor is Mg(2+).

Its subcellular location is the cytoplasm. It is found in the nucleus. It carries out the reaction D-ribitol 5-phosphate + H2O = ribitol + phosphate. The catalysed reaction is D-sorbitol 6-phosphate + H2O = D-sorbitol + phosphate. It catalyses the reaction sn-glycerol 1-phosphate + H2O = glycerol + phosphate. The enzyme catalyses D-erythrose 4-phosphate + H2O = D-erythrose + phosphate. Its function is as follows. Hydrolyzes sugar alcohol (polyol) phosphates. Dephosphorylates a variety of substrates, including: sn-glycerol 1-phosphate (D-glycerol 3-phosphate), D-ribitol 5-phosphate, D-sorbitol 6-phosphate (D-glucitol 6-phosphate), and D-erythrose 4-phosphate. Prevents accumulation of toxic levels of polyol phosphates, which can impair glycolysis by inhibiting glucose-6-phosphate isomerase. This is Polyol phosphate phosphatase PYP1 from Saccharomyces cerevisiae (strain ATCC 204508 / S288c) (Baker's yeast).